A 156-amino-acid chain; its full sequence is Small ribosomal subunit protein uS7cz/uS7cy (156 aa).

Belongs to the universal ribosomal protein uS7 family. As to quaternary structure, part of the 30S ribosomal subunit.

Its subcellular location is the plastid. It is found in the chloroplast. One of the primary rRNA binding proteins, it binds directly to 16S rRNA where it nucleates assembly of the head domain of the 30S subunit. The chain is Small ribosomal subunit protein uS7cz/uS7cy (rps7-A) from Triticum aestivum (Wheat).